The following is a 119-amino-acid chain: NADH-quinone oxidoreductase subunit A (119 aa).

The next 3 helical transmembrane spans lie at 7-27 (FPVL…VSIG), 63-83 (LVAI…PWGV), and 88-108 (IGWP…LGFA).

Belongs to the complex I subunit 3 family. As to quaternary structure, NDH-1 is composed of 14 different subunits. Subunits NuoA, H, J, K, L, M, N constitute the membrane sector of the complex.

It localises to the cell inner membrane. It catalyses the reaction a quinone + NADH + 5 H(+)(in) = a quinol + NAD(+) + 4 H(+)(out). Functionally, NDH-1 shuttles electrons from NADH, via FMN and iron-sulfur (Fe-S) centers, to quinones in the respiratory chain. The immediate electron acceptor for the enzyme in this species is believed to be ubiquinone. Couples the redox reaction to proton translocation (for every two electrons transferred, four hydrogen ions are translocated across the cytoplasmic membrane), and thus conserves the redox energy in a proton gradient. The chain is NADH-quinone oxidoreductase subunit A from Paraburkholderia phytofirmans (strain DSM 17436 / LMG 22146 / PsJN) (Burkholderia phytofirmans).